Consider the following 532-residue polypeptide: Berberine bridge enzyme-like 18 (532 aa).

Positions 1–29 (MKFQSFFSSVLIFFTTSTLLLSIPHPVSA) are cleaved as a signal peptide. N-linked (GlcNAc...) asparagine glycosylation is found at Asn-30, Asn-33, Asn-46, Asn-59, Asn-147, Asn-169, and Asn-262. Cysteines 40 and 102 form a disulfide. The region spanning 80 to 254 (DVPKPVLILT…LSWKIGLINV (175 aa)) is the FAD-binding PCMH-type domain. The segment at residues 117–179 (HDYEGLSYVT…RTLAFPAGVC (63 aa)) is a cross-link (6-(S-cysteinyl)-8alpha-(pros-histidyl)-FAD (His-Cys)).

The protein belongs to the oxygen-dependent FAD-linked oxidoreductase family. The cofactor is FAD. In terms of processing, the FAD cofactor is bound via a bicovalent 6-S-cysteinyl, 8alpha-N1-histidyl FAD linkage.

The protein resides in the secreted. It is found in the cell wall. The polypeptide is Berberine bridge enzyme-like 18 (Arabidopsis thaliana (Mouse-ear cress)).